The following is a 101-amino-acid chain: Small ribosomal subunit protein uS14A (101 aa).

The tract at residues 31 to 74 is disordered; the sequence is IRKPSTPEADRAAAQAALQRLPRDASPVRLRNRDAADGRPRGHL. The span at 61 to 70 shows a compositional bias: basic and acidic residues; it reads RNRDAADGRP.

The protein belongs to the universal ribosomal protein uS14 family. As to quaternary structure, part of the 30S ribosomal subunit. Contacts proteins S3 and S10.

Binds 16S rRNA, required for the assembly of 30S particles and may also be responsible for determining the conformation of the 16S rRNA at the A site. The chain is Small ribosomal subunit protein uS14A from Nocardia farcinica (strain IFM 10152).